The primary structure comprises 635 residues: Chaperone protein HtpG (635 aa).

The a; substrate-binding stretch occupies residues Met1–Arg343. Positions Glu344–Arg560 are b. The c stretch occupies residues Leu561–Asn635.

It belongs to the heat shock protein 90 family. As to quaternary structure, homodimer.

The protein resides in the cytoplasm. In terms of biological role, molecular chaperone. Has ATPase activity. The chain is Chaperone protein HtpG from Saccharophagus degradans (strain 2-40 / ATCC 43961 / DSM 17024).